The primary structure comprises 304 residues: Splicing factor U2af small subunit B (304 aa).

A C3H1-type 1 zinc finger spans residues Glu12–Pro40. One can recognise an RRM domain in the interval Pro44–Val146. Residues Asp148–Gln175 form a C3H1-type 2 zinc finger. The segment covering Leu184 to Asn207 has biased composition (basic residues). The segment at Leu184–Pro304 is disordered. Positions Arg208–Tyr220 are enriched in basic and acidic residues. Over residues Arg221 to Ser258 the composition is skewed to gly residues. Basic residues predominate over residues Arg268–Ser280. A compositionally biased stretch (basic and acidic residues) spans Pro281 to Pro304.

This sequence belongs to the splicing factor SR family.

It localises to the nucleus. Its function is as follows. Necessary for the splicing of pre-mRNA. The chain is Splicing factor U2af small subunit B (U2AF35B) from Oryza sativa subsp. japonica (Rice).